Here is a 190-residue protein sequence, read N- to C-terminus: Peptide methionine sulfoxide reductase A2-2 (190 aa).

Positions 1–20 (MSNDTGADGGAANPDLGPDA) are disordered. Positions 10–20 (GAANPDLGPDA) are enriched in low complexity.

The protein belongs to the MsrA Met sulfoxide reductase family.

It is found in the cytoplasm. The protein resides in the cytosol. It carries out the reaction L-methionyl-[protein] + [thioredoxin]-disulfide + H2O = L-methionyl-(S)-S-oxide-[protein] + [thioredoxin]-dithiol. The enzyme catalyses [thioredoxin]-disulfide + L-methionine + H2O = L-methionine (S)-S-oxide + [thioredoxin]-dithiol. Functionally, catalyzes the reduction of methionine sulfoxide (MetSO) to methionine in proteins. Plays a protective role against oxidative stress by restoring activity to proteins that have been inactivated by methionine oxidation. MSRA family specifically reduces the MetSO S-enantiomer. The chain is Peptide methionine sulfoxide reductase A2-2 (MSRA2-2) from Oryza sativa subsp. japonica (Rice).